Here is an 842-residue protein sequence, read N- to C-terminus: Leucine--tRNA ligase (842 aa).

The 'HIGH' region motif lies at 62 to 72; the sequence is PYPSGDLHMGH. Residues 390-414 are disordered; sequence GDEDPAETGVATAGEGTLKNSGELD. The short motif at 607–611 is the 'KMSKS' region element; it reads AMSKS. Lysine 610 provides a ligand contact to ATP.

The protein belongs to the class-I aminoacyl-tRNA synthetase family.

Its subcellular location is the cytoplasm. The enzyme catalyses tRNA(Leu) + L-leucine + ATP = L-leucyl-tRNA(Leu) + AMP + diphosphate. The sequence is that of Leucine--tRNA ligase from Paenarthrobacter aurescens (strain TC1).